The chain runs to 281 residues: Homeobox protein Hox-A5 (281 aa).

2 disordered regions span residues 65 to 144 and 162 to 183; these read VGNE…PCSS and PLEE…SDST. Polar residues-rich tracts occupy residues 68 to 99 and 114 to 127; these read ERTQ…STGT and VASS…QSQH. A compositionally biased stretch (low complexity) spans 132 to 144; the sequence is NSITTPCSTPCSS. Residues 172–183 are compositionally biased toward polar residues; sequence APTTPQNVSDST. An Antp-type hexapeptide motif is present at residues 187–192; sequence IYPWMR. Positions 205 to 264 form a DNA-binding region, homeobox; sequence GKRARTAYTRYQTLELEKEFHFNRYLTRRRRIEIAHALCLSERQIKIWFQNRRMKWKKDN.

It belongs to the Antp homeobox family.

The protein localises to the nucleus. Its function is as follows. Sequence-specific transcription factor which is part of a developmental regulatory system that provides cells with specific positional identities on the anterior-posterior axis. This chain is Homeobox protein Hox-A5 (hoxa5), found in Morone saxatilis (Striped bass).